The chain runs to 289 residues: E3 ubiquitin-protein ligase MARCHF8 (289 aa).

A disordered region spans residues 1 to 68 (MNMPLHQISA…SAPVSSFPRT (68 aa)). Residues 25 to 39 (KTKEKEREEQNEKTL) are compositionally biased toward basic and acidic residues. A compositionally biased stretch (low complexity) spans 50 to 64 (SKAGGSSVASAPVSS). The segment at 70-131 (VTPSNQDICR…ELCKYEFIME (62 aa)) adopts an RING-CH-type zinc-finger fold. Zn(2+)-binding residues include Cys-78, Cys-81, Cys-95, Cys-97, His-105, Cys-108, Cys-121, and Cys-124. A run of 2 helical transmembrane segments spans residues 155–175 (CSVT…YVLI) and 195–215 (FWTK…FMYV).

Interacts with CD86.

The protein resides in the golgi apparatus membrane. Its subcellular location is the endoplasmic reticulum membrane. It localises to the cytoplasmic vesicle membrane. It is found in the lysosome membrane. The protein localises to the early endosome membrane. It carries out the reaction S-ubiquitinyl-[E2 ubiquitin-conjugating enzyme]-L-cysteine + [acceptor protein]-L-lysine = [E2 ubiquitin-conjugating enzyme]-L-cysteine + N(6)-ubiquitinyl-[acceptor protein]-L-lysine.. The protein operates within protein modification; protein ubiquitination. E3 ubiquitin-protein ligase that plays several important roles in innate immunity and adaptive immunity. Mediates ubiquitination of CD86 and MHC class II proteins, such as HLA-DR alpha and beta, and promotes their subsequent endocytosis and sorting to lysosomes via multivesicular bodies. Possesses a very broad antiviral activity by specifically inactivating different viral fusion proteins. Targets and ubiquitinates cytoplasmic lysine residues of viral envelope glycoproteins with single transmembrane domains leading to their lysosomal degradation. Mediates the regulation of constitutive ubiquitination and trafficking of the viral restriction factor BST2 within the endocytic pathway. Plays a role in maintenance of immune tolerance to self by promoting the turnover and proteasomal degradation of PD-L1/CD274 via ubiquitination. Catalyzes the 'Lys-63'-linked polyubiquitylation of cGAS thereby inhibiting its DNA binding ability and impairing its antiviral innate immunity. Negatively regulates IL7-mediated T-cell homeostasis by mediating 'Lys-27'-linked polyubiquitination of IL7R, leading to its lysosomal degradation. The polypeptide is E3 ubiquitin-protein ligase MARCHF8 (MARCHF8) (Bos taurus (Bovine)).